The following is a 332-amino-acid chain: Probable sugar phosphate/phosphate translocator At1g53660 (332 aa).

10 helical membrane passes run 19–39 (ASIL…KWVL), 46–66 (FPYP…LCFL), 82–102 (LEIY…TLWL), 120–140 (AIMP…IMSC), 143–163 (LLIM…ELNI), 165–185 (WVGV…LILM), 199–219 (LSLM…PWIF), 233–253 (LVLS…FLVI), 259–281 (LTIR…LLFA), and 285–304 (LTII…ATYN). The segment covering 312–322 (ESITLVSQSPK) has biased composition (polar residues). Positions 312-332 (ESITLVSQSPKNSDKKPDGPL) are disordered. The span at 323 to 332 (NSDKKPDGPL) shows a compositional bias: basic and acidic residues.

It belongs to the TPT transporter family. TPT (TC 2.A.7.9) subfamily.

The protein localises to the membrane. This chain is Probable sugar phosphate/phosphate translocator At1g53660, found in Arabidopsis thaliana (Mouse-ear cress).